Here is an 826-residue protein sequence, read N- to C-terminus: MGKKRTKGKTVPIDDSSESLEPVCRHIRKGLEQGNLKKALVNVEWNICQDCKTDNKVKDKSEEETEENPSVWLCLKCGHQGCGRNSQEQHALKHYMKPRSEPHCLVLSLDNWSVWCYLCDDEVHYCNSNRLGQVVDYVRKQAGNTTPESAEDNGNIELENKKLEKESKNEQEREKKENMARENPSMNSTSQITVKGLSNLGNTCFFNAVMQNLSQTPVLRELLKEVKMSGTIVKIEPPDLALTEPLEINLEPPGPLTLAMSQFLNEMQETKKGIVTPRELFSQVCKKAVRFKGYQQQDSQELLRYLLDGMRAEEHQRVSKGILKAFDNSTEKVDEELKNKVKEYEKKKSVPSFVDRIFGGELTSTIMCDECRTVSLVHESFLDLSLPVLDDQSGKKSINDKNLKKTMEDEDKDSEEEKDNDSYLKERNDIPSGTSKHLQKKAKKQAKKQAKNQRRQQKIQGKVLHLNDVYAIDHPEDNECEVEMSLQREADIKSNHISQEEVAPKEYCVNQKDLNGHEKMIESITDNQKSTEEAAMKNVSVDNDLEVLASSATECPRNLNGAYLKEGSNGEVDISSGFENLNLNAALQPDEINIEILDDDPTPGTKVYEVVNEDPETAFCTLANREAFNTDECSVQHCLYQFTRNEKLRDANKLLCEVCTRRQYSGPKANMKGERKHIYTNAKKQMLISLAPPVLTLHFKRFQQAGFNLRKVNKHIKFPEILDLAPFCTLKCKNVAEEHTRVLYSLYGVVEHSGTMRSGHYTAYAKTRTASTHLSNLVLHGDIPQDFEMESTKGQWFHISDTHVQAVPTTKVLSSQAYLLFYERIL.

The segment at 22–142 (PVCRHIRKGL…QVVDYVRKQA (121 aa)) adopts a UBP-type zinc-finger fold. The Zn(2+) site is built by Cys24, His26, Cys48, Cys51, Cys74, Cys77, Cys82, His90, His94, His103, Cys116, and Cys119. Lys140 participates in a covalent cross-link: Glycyl lysine isopeptide (Lys-Gly) (interchain with G-Cter in SUMO2). The disordered stretch occupies residues 144-189 (NTTPESAEDNGNIELENKKLEKESKNEQEREKKENMARENPSMNST). The segment covering 158 to 180 (LENKKLEKESKNEQEREKKENMA) has biased composition (basic and acidic residues). Ser188 is modified (phosphoserine). The 631-residue stretch at 195–825 (KGLSNLGNTC…QAYLLFYERI (631 aa)) folds into the USP domain. Cys204 serves as the catalytic Nucleophile. Residues 393–407 (SGKKSINDKNLKKTM) show a composition bias toward basic and acidic residues. The segment at 393-458 (SGKKSINDKN…QAKNQRRQQK (66 aa)) is disordered. Positions 408-419 (EDEDKDSEEEKD) are enriched in acidic residues. Ser414 carries the phosphoserine modification. Over residues 420 to 429 (NDSYLKERND) the composition is skewed to basic and acidic residues. Residues 437-457 (HLQKKAKKQAKKQAKNQRRQQ) are compositionally biased toward basic residues. Phosphoserine is present on residues Ser530 and Ser551. Catalysis depends on His760, which acts as the Proton acceptor.

This sequence belongs to the peptidase C19 family. USP16 subfamily. In terms of assembly, homotetramer. Associates with late pre-40S ribosomes. Interacts with CEP78; promoting deubiquitination of tektins. In terms of processing, phosphorylated at the onset of mitosis and dephosphorylated during the metaphase/anaphase transition. Phosphorylation by AURKB enhances the deubiquitinase activity.

It is found in the nucleus. The enzyme catalyses Thiol-dependent hydrolysis of ester, thioester, amide, peptide and isopeptide bonds formed by the C-terminal Gly of ubiquitin (a 76-residue protein attached to proteins as an intracellular targeting signal).. Its function is as follows. Specifically deubiquitinates 'Lys-120' of histone H2A (H2AK119Ub), a specific tag for epigenetic transcriptional repression, thereby acting as a coactivator. Deubiquitination of histone H2A is a prerequisite for subsequent phosphorylation at 'Ser-11' of histone H3 (H3S10ph), and is required for chromosome segregation when cells enter into mitosis. In resting B- and T-lymphocytes, phosphorylation by AURKB leads to enhance its activity, thereby maintaining transcription in resting lymphocytes. Regulates Hox gene expression via histone H2A deubiquitination. Prefers nucleosomal substrates. Does not deubiquitinate histone H2B. Also deubiquitinates non-histone proteins, such as ribosomal protein RPS27A: deubiquitination of monoubiquitinated RPS27A promotes maturation of the 40S ribosomal subunit. Also mediates deubiquitination of tektin proteins (TEKT1, TEKT2, TEK3, TEKT4 and TEKT5), promoting their stability. The protein is Ubiquitin carboxyl-terminal hydrolase 16 of Bos taurus (Bovine).